We begin with the raw amino-acid sequence, 757 residues long: LPS-assembly protein LptD (757 aa).

A signal peptide spans 1-21; that stretch reads MRRLIPIAITGSLLWGAAVQA.

This sequence belongs to the LptD family. Component of the lipopolysaccharide transport and assembly complex. Interacts with LptE and LptA.

Its subcellular location is the cell outer membrane. Functionally, together with LptE, is involved in the assembly of lipopolysaccharide (LPS) at the surface of the outer membrane. The sequence is that of LPS-assembly protein LptD from Alkalilimnicola ehrlichii (strain ATCC BAA-1101 / DSM 17681 / MLHE-1).